The primary structure comprises 356 residues: Phospho-N-acetylmuramoyl-pentapeptide-transferase (356 aa).

The next 10 helical transmembrane spans lie at 4 to 24, 53 to 73, 76 to 96, 116 to 136, 152 to 172, 186 to 206, 228 to 248, 253 to 273, 278 to 298, and 333 to 353; these read ILLA…WFIH, GGAV…LVTW, PSIS…IGFL, LLGQ…FPDV, ISWL…LIAG, LATG…IWQF, DIAV…WWNA, IFLG…MAVV, LLLV…MLQV, and FWII…AEWV.

It belongs to the glycosyltransferase 4 family. MraY subfamily. It depends on Mg(2+) as a cofactor.

The protein localises to the cell membrane. The catalysed reaction is UDP-N-acetyl-alpha-D-muramoyl-L-alanyl-gamma-D-glutamyl-meso-2,6-diaminopimeloyl-D-alanyl-D-alanine + di-trans,octa-cis-undecaprenyl phosphate = di-trans,octa-cis-undecaprenyl diphospho-N-acetyl-alpha-D-muramoyl-L-alanyl-D-glutamyl-meso-2,6-diaminopimeloyl-D-alanyl-D-alanine + UMP. The protein operates within cell wall biogenesis; peptidoglycan biosynthesis. In terms of biological role, catalyzes the initial step of the lipid cycle reactions in the biosynthesis of the cell wall peptidoglycan: transfers peptidoglycan precursor phospho-MurNAc-pentapeptide from UDP-MurNAc-pentapeptide onto the lipid carrier undecaprenyl phosphate, yielding undecaprenyl-pyrophosphoryl-MurNAc-pentapeptide, known as lipid I. The chain is Phospho-N-acetylmuramoyl-pentapeptide-transferase from Cutibacterium acnes (strain DSM 16379 / KPA171202) (Propionibacterium acnes).